Reading from the N-terminus, the 956-residue chain is Translation initiation factor IF-2 (956 aa).

Disordered stretches follow at residues 53-102, 116-315, and 334-371; these read QFAG…QQEI, GKID…NRPA, and TLEKLQGKGGKSKAAKYRRDKRETHRQKSDDEQRALDE. Basic and acidic residues predominate over residues 58-102; it reads KGNKEASKEVGEEKRKEKEALRVEREKEIEDKRRQEEERQKQQEI. Residues 142-158 are compositionally biased toward polar residues; the sequence is VTPTQTEKPVQKETVQS. Residues 166–186 are compositionally biased toward basic and acidic residues; the sequence is SEEKKVEKPIITEKKEVKAES. The segment covering 197-208 has biased composition (low complexity); the sequence is TDPTTAEETITT. Residues 209 to 229 are compositionally biased toward polar residues; it reads QYQKLSGTTLTGQTIDLSQFN. Low complexity predominate over residues 240-257; it reads ITPNKPGTPGVGNNNNAN. Residues 343–352 are compositionally biased toward basic residues; that stretch reads GKSKAAKYRR. Residues 353–371 show a composition bias toward basic and acidic residues; the sequence is DKRETHRQKSDDEQRALDE. One can recognise a tr-type G domain in the interval 454–622; sequence TRAPIVTVMG…KVLLEAEILD (169 aa). The segment at 463-470 is G1; the sequence is GHVDHGKT. GTP is bound at residue 463 to 470; the sequence is GHVDHGKT. Positions 488-492 are G2; it reads GITQH. The segment at 510-513 is G3; it reads DTPG. GTP is bound by residues 510–514 and 564–567; these read DTPGH and NKVD. The segment at 564-567 is G4; it reads NKVD. Residues 600–602 form a G5 region; sequence SAK.

It belongs to the TRAFAC class translation factor GTPase superfamily. Classic translation factor GTPase family. IF-2 subfamily.

It localises to the cytoplasm. One of the essential components for the initiation of protein synthesis. Protects formylmethionyl-tRNA from spontaneous hydrolysis and promotes its binding to the 30S ribosomal subunits. Also involved in the hydrolysis of GTP during the formation of the 70S ribosomal complex. In Flavobacterium johnsoniae (strain ATCC 17061 / DSM 2064 / JCM 8514 / BCRC 14874 / CCUG 350202 / NBRC 14942 / NCIMB 11054 / UW101) (Cytophaga johnsonae), this protein is Translation initiation factor IF-2.